The sequence spans 1402 residues: Nuclear pore complex protein Nup160 (1402 aa).

A phosphoserine mark is found at S10, S456, S915, and S1123.

Part of the nuclear pore complex (NPC). Forms part of the NUP160 subcomplex in the nuclear pore which is composed of NUP160, NUP133, NUP107 and NUP96. This complex plays a role in RNA export and in tethering NUP98 and NUP153 to the nucleus.

The protein resides in the nucleus. It is found in the nuclear pore complex. In terms of biological role, functions as a component of the nuclear pore complex (NPC). Involved in poly(A)+ RNA transport. The protein is Nuclear pore complex protein Nup160 (Nup160) of Mus musculus (Mouse).